The sequence spans 262 residues: Indole-3-glycerol phosphate synthase (262 aa).

The protein belongs to the TrpC family.

The enzyme catalyses 1-(2-carboxyphenylamino)-1-deoxy-D-ribulose 5-phosphate + H(+) = (1S,2R)-1-C-(indol-3-yl)glycerol 3-phosphate + CO2 + H2O. The protein operates within amino-acid biosynthesis; L-tryptophan biosynthesis; L-tryptophan from chorismate: step 4/5. The sequence is that of Indole-3-glycerol phosphate synthase from Aromatoleum aromaticum (strain DSM 19018 / LMG 30748 / EbN1) (Azoarcus sp. (strain EbN1)).